A 542-amino-acid polypeptide reads, in one-letter code: Chaperonin GroEL 2 (542 aa).

Residues 30–33, Lys-51, 87–91, Gly-415, and Asp-496 each bind ATP; these read TLGP and DGTTT.

The protein belongs to the chaperonin (HSP60) family. As to quaternary structure, forms a cylinder of 14 subunits composed of two heptameric rings stacked back-to-back. Interacts with the co-chaperonin GroES.

It localises to the cytoplasm. It catalyses the reaction ATP + H2O + a folded polypeptide = ADP + phosphate + an unfolded polypeptide.. Its function is as follows. Together with its co-chaperonin GroES, plays an essential role in assisting protein folding. The GroEL-GroES system forms a nano-cage that allows encapsulation of the non-native substrate proteins and provides a physical environment optimized to promote and accelerate protein folding. In Azorhizobium caulinodans (strain ATCC 43989 / DSM 5975 / JCM 20966 / LMG 6465 / NBRC 14845 / NCIMB 13405 / ORS 571), this protein is Chaperonin GroEL 2.